We begin with the raw amino-acid sequence, 461 residues long: Cysteine--tRNA ligase (461 aa).

Cys27 serves as a coordination point for Zn(2+). A 'HIGH' region motif is present at residues 29–39; that stretch reads ITVYDYCHIGH. The Zn(2+) site is built by Cys208, His233, and Glu237. Residues 265–269 carry the 'KMSKS' region motif; the sequence is KMSKS. ATP is bound at residue Lys268.

It belongs to the class-I aminoacyl-tRNA synthetase family. In terms of assembly, monomer. The cofactor is Zn(2+).

It is found in the cytoplasm. It catalyses the reaction tRNA(Cys) + L-cysteine + ATP = L-cysteinyl-tRNA(Cys) + AMP + diphosphate. The polypeptide is Cysteine--tRNA ligase (Chromohalobacter salexigens (strain ATCC BAA-138 / DSM 3043 / CIP 106854 / NCIMB 13768 / 1H11)).